Here is a 197-residue protein sequence, read N- to C-terminus: Putative double homeobox protein 3 (197 aa).

DNA-binding regions (homeobox) lie at residues 46–105 and 121–180; these read GRRM…LRQH and GRRK…WGQS. The interval 102-127 is disordered; it reads LRQHRRQSRPWPGRRDPQKGRRKRTA.

It belongs to the paired homeobox family. As to expression, expressed in hepatoma Hep3B cells.

It is found in the nucleus. The chain is Putative double homeobox protein 3 (DUX3) from Homo sapiens (Human).